A 208-amino-acid polypeptide reads, in one-letter code: Coiled-coil domain-containing protein 25 (208 aa).

Residues 1–105 are Extracellular-facing; that stretch reads MVFYFTSSSV…SNLKKTADMD (105 aa). A DNA-binding region spans residues 21–25; sequence KDKYE. Lys23 is modified (N6-acetyllysine). A helical membrane pass occupies residues 106 to 122; that stretch reads VGQIGFHRQKDVKIVTV. Residues 117–187 are a coiled coil; it reads VKIVTVEKKV…REMDELRSYS (71 aa). At 123–208 the chain is on the cytoplasmic side; that stretch reads EKKVNEILNR…QDGNDSDEFM (86 aa). Basic and acidic residues predominate over residues 145 to 184; that stretch reads EAEKECRDHEERNEKKAQIQEMKRREKEEMKKKREMDELR. The tract at residues 145–208 is disordered; sequence EAEKECRDHE…QDGNDSDEFM (64 aa). Phosphoserine is present on Ser204.

Belongs to the CCDC25 family. In terms of assembly, interacts (via cytoplasmic region) with ILK.

The protein localises to the cell membrane. The protein resides in the endomembrane system. Functionally, transmembrane receptor that senses neutrophil extracellular traps (NETs) and triggers the ILK-PARVB pathway to enhance cell motility. NETs are mainly composed of DNA fibers and are released by neutrophils to bind pathogens during inflammation. Formation of NETs is also associated with cancer metastasis, NET-DNA acting as a chemotactic factor to attract cancer cells. Specifically binds NETs on its extracellular region, in particular the 8-OHdG-enriched DNA present in NETs, and recruits ILK, initiating the ILK-PARVB cascade to induce cytoskeleton rearrangement and directional migration of cells. The chain is Coiled-coil domain-containing protein 25 from Bos taurus (Bovine).